A 265-amino-acid polypeptide reads, in one-letter code: C-type lectin domain family 12 member A (265 aa).

Over 1–43 (MSEEVTYADLQFQNSSEMEKIPEIGKFGEKAPPAPSHVWRPAA) the chain is Cytoplasmic. The ITIM motif motif lies at 5 to 10 (VTYADL). Y7 is subject to Phosphotyrosine. Residues 44 to 64 (LFLTLLCLLLLIGLGVLASMF) form a helical; Signal-anchor for type II membrane protein membrane-spanning segment. Over 65–265 (HVTLKIEMKK…QLGSTYFREA (201 aa)) the chain is Extracellular. N-linked (GlcNAc...) asparagine glycosylation is found at N88 and N98. Cystine bridges form between C118–C130, C133–C144, C161–C248, and C227–C240. Residues 140 to 249 (HKDSCYFLSD…CTYKKRMICE (110 aa)) enclose the C-type lectin domain. An N-linked (GlcNAc...) asparagine glycan is attached at N165.

Homodimer; disulfide-linked. Interacts (when the ITIM motif is phosphorylated) with PTPN6 and PTPN11. Phosphorylated at Tyr-7 by SRC in the ITIM motif following ligand-binding, promoting recruitment of tyrosine-protein phosphatases PTPN6 and PTPN11. In terms of processing, highly N-glycosylated; glycosylation varies between cell types. As to expression, preferentially expressed in lymphoid tissues and immune cells, including natural killer (NK) cells, T-cells, dendritic cells and monocytes or macrophages. Detected in spleen macrophage-rich red pulp and in lymph node (at protein level). Detected in peripheral blood leukocytes, dendritic cells, bone marrow, monocytes, mononuclear leukocytes and macrophages.

The protein localises to the cell membrane. Its function is as follows. Myeloid inhibitory C-type lectin receptor that acts as a negative regulator of myeloid cell activation. Myeloid cell inhibition is required to limit proinflammatory pathways and protect against excessive inflammation. Specifically recognizes and binds various structures, such as neutrophil extracellular traps (NETs) or monosodium urate crystals. Also acts as a pattern-recognition receptor for pathogen-associated molecules, such as plasmodium hemozoin or mycobacterial micolic acid. Ligand-binding induces phosphorylation of its ITIM motif, followed by recruitment of tyrosine-protein phosphatases PTPN6 and PTPN11, which counteract tyrosine-protein kinase SYK, thereby preventing myeloid cell activation. Acts as a pattern-recognition receptor for NETs in neutrophils: specifically recognizes DNA in NETs, leading to inhibit neutrophil activation and limit further NET formation. This regulation is essential for controlling key neutrophil responses and limit NET-mediated inflammatory conditions. Also recognizes dead cells by acting as a receptor for monosodium urate crystals, leading to down-regulate neutrophil activation. Binding to monosodium urate crystals also promotes the type I interferon response. Acts as an inhibitor of natural killer (NK) cell cytotoxicity. Also acts as an ihibitor of dendritic cell maturation in an IL10-dependent manner. The polypeptide is C-type lectin domain family 12 member A (Homo sapiens (Human)).